The primary structure comprises 607 residues: Glutamyl-tRNA(Gln) amidotransferase subunit E (607 aa).

This sequence belongs to the GatB/GatE family. GatE subfamily. Heterodimer of GatD and GatE.

The enzyme catalyses L-glutamyl-tRNA(Gln) + L-glutamine + ATP + H2O = L-glutaminyl-tRNA(Gln) + L-glutamate + ADP + phosphate + H(+). Its function is as follows. Allows the formation of correctly charged Gln-tRNA(Gln) through the transamidation of misacylated Glu-tRNA(Gln) in organisms which lack glutaminyl-tRNA synthetase. The reaction takes place in the presence of glutamine and ATP through an activated gamma-phospho-Glu-tRNA(Gln). The GatDE system is specific for glutamate and does not act on aspartate. This Pyrobaculum islandicum (strain DSM 4184 / JCM 9189 / GEO3) protein is Glutamyl-tRNA(Gln) amidotransferase subunit E.